A 65-amino-acid chain; its full sequence is Large ribosomal subunit protein bL35 (65 aa).

Belongs to the bacterial ribosomal protein bL35 family.

This chain is Large ribosomal subunit protein bL35, found in Aliarcobacter butzleri (strain RM4018) (Arcobacter butzleri).